A 674-amino-acid chain; its full sequence is 1,4-alpha-glucan branching enzyme GlgB 1 (674 aa).

The Nucleophile role is filled by Asp-336. The active-site Proton donor is Glu-389.

This sequence belongs to the glycosyl hydrolase 13 family. GlgB subfamily. Monomer.

It carries out the reaction Transfers a segment of a (1-&gt;4)-alpha-D-glucan chain to a primary hydroxy group in a similar glucan chain.. It functions in the pathway glycan biosynthesis; glycogen biosynthesis. Functionally, catalyzes the formation of the alpha-1,6-glucosidic linkages in glycogen by scission of a 1,4-alpha-linked oligosaccharide from growing alpha-1,4-glucan chains and the subsequent attachment of the oligosaccharide to the alpha-1,6 position. This Clostridium perfringens (strain SM101 / Type A) protein is 1,4-alpha-glucan branching enzyme GlgB 1.